A 445-amino-acid polypeptide reads, in one-letter code: Exodeoxyribonuclease 7 large subunit (445 aa).

It belongs to the XseA family. Heterooligomer composed of large and small subunits.

The protein localises to the cytoplasm. It carries out the reaction Exonucleolytic cleavage in either 5'- to 3'- or 3'- to 5'-direction to yield nucleoside 5'-phosphates.. Bidirectionally degrades single-stranded DNA into large acid-insoluble oligonucleotides, which are then degraded further into small acid-soluble oligonucleotides. The chain is Exodeoxyribonuclease 7 large subunit from Xanthomonas euvesicatoria pv. vesicatoria (strain 85-10) (Xanthomonas campestris pv. vesicatoria).